The following is a 1162-amino-acid chain: Integrin alpha-L (1162 aa).

A signal peptide spans 1 to 23; the sequence is MSFRIAGPRLLLLGLQLFAKAWS. Residues 24 to 1088 are Extracellular-facing; sequence YNLDTRPTQS…DLIHEKEMLH (1065 aa). FG-GAP repeat units lie at residues 28-79 and 80-138; these read TRPT…FCQP and VSLH…GPML. Cys70 and Cys77 are joined by a disulfide. Residue Asn86 is glycosylated (N-linked (GlcNAc...) asparagine). 2 cysteine pairs are disulfide-bonded: Cys108–Cys126 and Cys147–Cys199. The VWFA domain maps to 153 to 325; sequence DLVFLFDGSQ…EKLKDLFTDL (173 aa). N-linked (GlcNAc...) asparagine glycans are attached at residues Asn185 and Asn270. FG-GAP repeat units follow at residues 336–387, 390–443, 444–504, 505–561, and 565–625; these read NRQD…GATF, QEPL…GGRW, NQTQ…LFEM, VSEL…GLSP, and QRIQ…FSPE. Asn444 is a glycosylation site (N-linked (GlcNAc...) asparagine). Residues Asp466, Asp468, Asp470, Glu474, Asp528, Asn530, Asp532, Asp536, Asp588, Asp592, and Asp596 each coordinate Ca(2+). The cysteines at positions 651 and 705 are disulfide-linked. Asn668, Asn696, Asn724, and Asn728 each carry an N-linked (GlcNAc...) asparagine glycan. A disulfide bond links Cys768 and Cys774. The N-linked (GlcNAc...) asparagine glycan is linked to Asn777. A disulfide bond links Cys841 and Cys857. Asn858, Asn881, Asn891, Asn900, and Asn928 each carry an N-linked (GlcNAc...) asparagine glycan. Disulfide bonds link Cys994–Cys1010 and Cys1018–Cys1049. A glycan (N-linked (GlcNAc...) asparagine) is linked at Asn1057. A helical membrane pass occupies residues 1089–1109; it reads VYVLSGIGGLVLLFLIFLALY. The Cytoplasmic segment spans residues 1110 to 1162; that stretch reads KVGFFKRNLKEKMEADGGVPNGSPPEDTDPLAVPGEETKDMGCLEPLRESDKD. Residues 1112 to 1116 carry the GFFKR motif motif; that stretch reads GFFKR. Positions 1124–1162 are disordered; the sequence is ADGGVPNGSPPEDTDPLAVPGEETKDMGCLEPLRESDKD. Residues 1145–1162 are compositionally biased toward basic and acidic residues; sequence EETKDMGCLEPLRESDKD.

It belongs to the integrin alpha chain family. As to quaternary structure, heterodimer of an alpha and a beta subunit. The ITGAL alpha subunit associates with the ITGB2 beta subunit. Interacts with THBD. Interacts with CD226. In terms of processing, in resting T-cells, up to 40% of surface ITGAL is constitutively phosphorylated. Phosphorylation causes conformational changes needed for ligand binding and is necessary for the activation by some physiological agents. In terms of tissue distribution, leukocytes.

Its subcellular location is the cell membrane. In terms of biological role, integrin ITGAL/ITGB2 is a receptor for ICAM1, ICAM2, ICAM3 and ICAM4. Integrin ITGAL/ITGB2 is a receptor for F11R. Integrin ITGAL/ITGB2 is a receptor for the secreted form of ubiquitin-like protein ISG15; the interaction is mediated by ITGAL. Involved in a variety of immune phenomena including leukocyte-endothelial cell interaction, cytotoxic T-cell mediated killing, and antibody dependent killing by granulocytes and monocytes. Contributes to natural killer cell cytotoxicity. Involved in leukocyte adhesion and transmigration of leukocytes including T-cells and neutrophils. Acts as a platform at the immunological synapse to translate TCR engagement and density of the ITGAL ligand ICAM1 into graded adhesion. Required for generation of common lymphoid progenitor cells in bone marrow, indicating the role in lymphopoiesis. Integrin ITGAL/ITGB2 in association with ICAM3, contributes to apoptotic neutrophil phagocytosis by macrophages. This chain is Integrin alpha-L, found in Mus musculus (Mouse).